Here is a 202-residue protein sequence, read N- to C-terminus: MKNKKEEKINNLKKEEKINNLKKEEKINNLKKEEKEKNDDVQNKIIDLLEIKLKKSQEKIINMQLKNHEEILKLNYRLNSDIEKSRKFSLEKVIIEFLPIIDNIERALSVIKDKKEAFYLEIINKMNFIFSLLEEILSEFNVSKINEKNISFDPEIHQAMSINYNDEIEDNHVVDVMQSGYMLHKARLLRPAMVIVSKRKNN.

Belongs to the GrpE family. In terms of assembly, homodimer.

The protein resides in the cytoplasm. Functionally, participates actively in the response to hyperosmotic and heat shock by preventing the aggregation of stress-denatured proteins, in association with DnaK and GrpE. It is the nucleotide exchange factor for DnaK and may function as a thermosensor. Unfolded proteins bind initially to DnaJ; upon interaction with the DnaJ-bound protein, DnaK hydrolyzes its bound ATP, resulting in the formation of a stable complex. GrpE releases ADP from DnaK; ATP binding to DnaK triggers the release of the substrate protein, thus completing the reaction cycle. Several rounds of ATP-dependent interactions between DnaJ, DnaK and GrpE are required for fully efficient folding. The chain is Protein GrpE 1 from Buchnera aphidicola subsp. Schizaphis graminum (strain Sg).